The chain runs to 57 residues: UPF0057 membrane protein T23F2.4 (57 aa).

2 helical membrane-spanning segments follow: residues 3–23 (ITCM…VGVF) and 36–56 (ILLT…IILA).

The protein belongs to the UPF0057 (PMP3) family.

The protein resides in the membrane. The chain is UPF0057 membrane protein T23F2.4 from Caenorhabditis elegans.